The chain runs to 214 residues: Methyltransferase HEMK2 (214 aa).

Positions 29, 51, 53, 77, 103, 104, and 122 each coordinate S-adenosyl-L-methionine. Residue Asn122 coordinates a protein.

It belongs to the eukaryotic/archaeal PrmC-related family. In terms of assembly, heterodimer; heterodimerization with TRMT112 is required for S-adenosyl-L-methionine-binding. In terms of processing, ubiquitinated, leading to its degradation by the proteasome. Highly expressed in undifferentiated embryonic stem cells (at protein level). Also expressed in testis and brain, weakly expressed in differentiated embryonic stem cells and kidney. Not expressed in muscle, heart, placenta, pancreas, lung and stomach.

The protein resides in the nucleus. It carries out the reaction L-lysyl-[histone] + S-adenosyl-L-methionine = N(6)-methyl-L-lysyl-[histone] + S-adenosyl-L-homocysteine + H(+). The enzyme catalyses L-glutaminyl-[protein] + S-adenosyl-L-methionine = N(5)-methyl-L-glutaminyl-[protein] + S-adenosyl-L-homocysteine + H(+). It catalyses the reaction methylarsonous acid + S-adenosyl-L-methionine = dimethylarsinate + S-adenosyl-L-homocysteine + 2 H(+). Functionally, methyltransferase that can methylate proteins and, to a lower extent, arsenic. Catalytic subunit of a heterodimer with TRMT112, which monomethylates 'Lys-12' of histone H4 (H4K12me1), a modification present at the promoters of numerous genes encoding cell cycle regulators. Catalytic subunit of a heterodimer with TRMT112, which catalyzes N5-methylation of Glu residue of proteins with a Gly-Gln-Xaa-Xaa-Xaa-Arg motif. Methylates ETF1 on 'Gln-185'; ETF1 needs to be complexed to ERF3 in its GTP-bound form to be efficiently methylated. May also play a role in the modulation of arsenic-induced toxicity by mediating the conversion of monomethylarsonous acid (3+) into the less toxic dimethylarsonic acid. It however only plays a limited role in arsenic metabolism compared with AS3MT. The sequence is that of Methyltransferase HEMK2 from Mus musculus (Mouse).